Reading from the N-terminus, the 186-residue chain is Large ribosomal subunit protein uL5 (186 aa).

This sequence belongs to the universal ribosomal protein uL5 family. In terms of assembly, part of the 50S ribosomal subunit; part of the 5S rRNA/L5/L18/L25 subcomplex. Contacts the 5S rRNA and the P site tRNA. Forms a bridge to the 30S subunit in the 70S ribosome.

In terms of biological role, this is one of the proteins that bind and probably mediate the attachment of the 5S RNA into the large ribosomal subunit, where it forms part of the central protuberance. In the 70S ribosome it contacts protein S13 of the 30S subunit (bridge B1b), connecting the 2 subunits; this bridge is implicated in subunit movement. Contacts the P site tRNA; the 5S rRNA and some of its associated proteins might help stabilize positioning of ribosome-bound tRNAs. In Ruegeria pomeroyi (strain ATCC 700808 / DSM 15171 / DSS-3) (Silicibacter pomeroyi), this protein is Large ribosomal subunit protein uL5.